The following is a 135-amino-acid chain: Peptidyl-prolyl cis-trans isomerase FPR2 (135 aa).

The signal sequence occupies residues 1–17 (MMFNIYLFVTFFSTILA). The region spanning 43–132 (GDKVKVHYTG…VFDVELVDVK (90 aa)) is the PPIase FKBP-type domain.

Belongs to the FKBP-type PPIase family. FKBP2 subfamily.

The protein resides in the endoplasmic reticulum membrane. The catalysed reaction is [protein]-peptidylproline (omega=180) = [protein]-peptidylproline (omega=0). With respect to regulation, inhibited by both FK506 and rapamycin. Binds FK506 with 15-fold lower affinity than FKB1. Functionally, PPIases accelerate the folding of proteins. It catalyzes the cis-trans isomerization of proline imidic peptide bonds in oligopeptides. FKBP-13 may play a role in protein trafficking in the ER. The sequence is that of Peptidyl-prolyl cis-trans isomerase FPR2 (FPR2) from Saccharomyces cerevisiae (strain ATCC 204508 / S288c) (Baker's yeast).